We begin with the raw amino-acid sequence, 273 residues long: Transposable element Tcb2 transposase (273 aa).

This sequence belongs to the transposase 5 family.

Its subcellular location is the nucleus. In terms of biological role, probably essential for transposable element Tcb2 transposition. The chain is Transposable element Tcb2 transposase from Caenorhabditis briggsae.